Here is an 807-residue protein sequence, read N- to C-terminus: Leucine-rich repeat-containing protein 41 (807 aa).

The segment at 45 to 54 is interaction with Elongin BC complex; sequence ALFELCGRAV. Residues Ser155, Ser276, and Ser326 each carry the phosphoserine modification. 3 disordered regions span residues 269-290, 304-335, and 349-403; these read ASRG…RRPR, TRRK…AIGG, and ASGT…GSGA. Thr327 is modified (phosphothreonine). The span at 352 to 381 shows a compositional bias: low complexity; it reads TKQPSAPAAASASSSTSSKRAPASSASQPK. Residue Ser368 is modified to Phosphoserine. Positions 382–396 are enriched in basic residues; that stretch reads PLKRFKRAAGKKGPR. LRR repeat units lie at residues 482–502, 513–525, 526–550, 608–632, 638–661, 696–723, and 726–747; these read WVSL…IFRL, AGCR…LSDL, FSPL…VLSI, SGSL…LVLQ, NLSL…VLFL, NSTL…VFSE, and SSSL…LLEF.

As to quaternary structure, part of an E3 ubiquitin-protein ligase complex with Elongin BC (ELOB and ELOC), RBX1 and CUL5. Component of a probable ECS(LRRC41) complex which contains CUL5, RNF7/RBX2, Elongin BC and LRRC41. Interacts with CUL5, RNF7, ELOB and ELOC.

The protein operates within protein modification; protein ubiquitination. Functionally, probable substrate recognition component of an ECS (Elongin BC-CUL2/5-SOCS-box protein) E3 ubiquitin ligase complex which mediates the ubiquitination and subsequent proteasomal degradation of target proteins. The sequence is that of Leucine-rich repeat-containing protein 41 (Lrrc41) from Mus musculus (Mouse).